The chain runs to 1891 residues: MAGLQLMTPASSPMGPFFGLPWQQEAIHDNIYTPRKYQVELLEAALDHNTIVCLNSGSGKTFIAVLLSKELSYQIRGDFSKNAKRTVFLVNSEKQVSQQVSAVRTHTDLKVGEYSDLQKTQCWAKEKWYQEFETRQVLVMTCHIFLNVLKSGNVSLSNINLLVFDECHLAIQDHPYREIMKICESCQPCPRILGLTASILNGKCDPRDLEEKIQKLEKILRSNAETATDLVVLDRYASQPCEIVLDCGPYVDRSGLFQRLLNELDEALNFLIDCNISTHSKERDSTIISKQILSDCRAVLLVLGPWCADKVAGMMVRELQKYIKHEQEELHRKFLLFTDTILRKIHALCEEHFSPASLDMKFVTPKVIKLLEILRKYKPYERQQFESVEWYNNRNQDNYVSWSDSEDDDDDEDEEIEEKEKTETSFPSPFTNILCGIIFVERRYTAVVLNRLIKEAGKQDPELAYISSNFITGHGIGKNQPRNKQMEVEFRKQEEVLRKFRAHETNLLIATSIVEEGVDIPKCNLVVRFDLPSEYRSYVQSKGRARAPISNYIMLADSDKIKTFEEDLKTYKAIEKILRNKCSKSIDCGNTESEPVVDDDEIFPPYVLRQDDGSPRVTINTAIGHINRYCARLPSDPFTHLAPKCKTREMSDGPYRSTLYLPINSPLRAPIVGPPMNCARLAERAVALICCKKLHEIGELDDHLMPVGKETVKYEEELDLHDEEETSVPGRPGSTKRRQCYPKAIPECLRNSYPKPGQPCYLYVIGMVLTTPLPDELNFRRRKLYPPEDTTRCFGILTAKPIPQIPHFPVYTRSGEVTISIELKKSGFTLNLEQLELITRLHQYIFSHILRLEKPALEFKPTVADCAYCVLPLNVVNDSGTLDIDFKFVEDIEKSEARTGIPNTQYSAESPFIFKLEDYQDAVIIPRYRNFDQPHRFYVADVYTDLTPLSKFPSPEYETFAEYYKTKYNLDLTNLNQPLLDVDHTSSRLNLLTPRHLNQKGKALPLSSAEKRKAKWESLQNKQILVPELCAIHPVPASLWRKAVCLPSILYRLHCLLTAEELRAQTAIDAGVGVKSLPEDFRYPNLDFGWKRSIDSKTFISSQSSSAVESEGDCRLNTTMVPDSATSSAANHVIYTQTNDQMSVNCTPLCQKSLSDLRGVCFSEDYKAINGVSCNGVTSDSEAESGVCFQKDERIACTQEIPEKSTSFHIQNLPKENQPILNECTLSKKFLDGNVSKPTSDECPSTCTSDMQYESGLSNGYSSKTLGPNPGLILQALTLSNASDGFNLERLEMLGDSFLKHAITTYLFCTYPDAHEGRLSYMRSKKVSNCNLYRLGKKKGSPSRMVVSIFDPPVNWLPPGYIVNQDKSSDKWESNETSGEGVMANGKIDEDFDDDDEEDEDLMWRNPKEETDFDDDFLEYDQEHIKFIDSMLMGSGAFVKKIPLSSFAPPDQNYEWRAPKKPLLESAQFPSEFDDFDYSSWDAMCYLDPSKAVEEDDFVVGFWNPSEENCGTDVGKQSISYDLHTEQCIADKSIADCVEALLGCYLTSCGERAAQLFLCSLGLKVLPQVRRSVTSTNSISASSSYQKTSTRDICTLNSELSSCKGVEYGYLKIPPRCMFEHPDAEKTLDHLISGFENFEKKINYPFKNKAYLLQAFTHASYHYNTITDCYQRLEFLGDAILDYLITKHLYEDPRQHSPGVLTDLRSALVNNTIFASLAVKYDYHKYFKAISPELFHVIDDFVQFQLEKNEMQGMDSELRRSEEDEEKEEDIEVPKAMGDIFESLAGAIYMDSGMSLETVWRVYYPMMHPLIEKFSANVPRSPVRELLEMEPETAKFSPAERTYDGKVRVTVEVVGKGKFKGVGRSYRIAKSAAARRALRSLKANQSQVPNS.

The region spanning 41–217 is the Helicase ATP-binding domain; it reads LLEAALDHNT…DLEEKIQKLE (177 aa). 54-61 is a binding site for ATP; the sequence is LNSGSGKT. Positions 165-168 match the DECH box motif; sequence DECH. The Helicase C-terminal domain maps to 425–594; the sequence is SFPSPFTNIL…SIDCGNTESE (170 aa). Residues 622–714 form the Dicer dsRNA-binding fold domain; sequence AIGHINRYCA…MPVGKETVKY (93 aa). Residues 887 to 1034 enclose the PAZ domain; that stretch reads KFVEDIEKSE…LVPELCAIHP (148 aa). RNase III domains are found at residues 1248–1379 and 1635–1793; these read TSDM…ETSG and FENF…MDSG. Mg(2+) contacts are provided by Glu1292, Asp1370, Glu1373, Glu1674, Asp1779, and Glu1782. A DRBM domain is found at 1818-1883; it reads VPRSPVRELL…ARRALRSLKA (66 aa).

Belongs to the helicase family. Dicer subfamily. Component of the RISC loading complex (RLC), or micro-RNA (miRNA) loading complex (miRLC), which is composed of dicer1, ago2 and tarbp2; dicer1 and tarbp2 are required to process precursor miRNAs (pre-miRNAs) to mature miRNAs and then load them onto ago2. Note that the trimeric RLC/miRLC is also referred to as RISC. The cofactor is Mg(2+). Mn(2+) serves as cofactor.

It localises to the cytoplasm. It catalyses the reaction Endonucleolytic cleavage to 5'-phosphomonoester.. Its function is as follows. Double-stranded RNA (dsRNA) endoribonuclease playing a central role in short dsRNA-mediated post-transcriptional gene silencing. Cleaves naturally occurring long dsRNAs and short hairpin pre-microRNAs (miRNA) into fragments of 21 to 23 nucleotides with 3' overhang of two nucleotides, producing respectively short interfering RNAs (siRNA) and mature microRNAs. SiRNAs and miRNAs serve as guide to direct the RNA-induced silencing complex (RISC) to complementary RNAs to degrade them or prevent their translation. Gene silencing mediated by siRNAs, also called RNA interference, controls the elimination of transcripts from mobile and repetitive DNA elements of the genome but also the degradation of exogenous RNA of viral origin for instance. The miRNA pathway on the other side is a mean to specifically regulate the expression of target genes. During embryonic development, at the left-right organizer, post-transcriptionally regulates the expression of dand5 in flow sensor cells. In post-flow stages, acts along with Bicc1 to repress dand5 mRNA translation and decay. Decreased Dand5 expression lifts repression of Nodal and defines leftness by induction of the lateral plate mesoderm Nodal signaling cascade. The chain is Endoribonuclease Dicer-L (dicer1.L) from Xenopus laevis (African clawed frog).